The sequence spans 201 residues: Small ribosomal subunit protein uS5 (201 aa).

A disordered region spans residues 1–28; the sequence is MAGPQRRGSGAGGGERRDRKGRDGGAGA. The segment covering 14 to 23 has biased composition (basic and acidic residues); that stretch reads GERRDRKGRD. Residues 34–97 enclose the S5 DRBM domain; sequence YVERVVAINR…EEAKKHFFKV (64 aa).

Belongs to the universal ribosomal protein uS5 family. As to quaternary structure, part of the 30S ribosomal subunit. Contacts proteins S4 and S8.

In terms of biological role, with S4 and S12 plays an important role in translational accuracy. Located at the back of the 30S subunit body where it stabilizes the conformation of the head with respect to the body. The polypeptide is Small ribosomal subunit protein uS5 (Streptomyces coelicolor (strain ATCC BAA-471 / A3(2) / M145)).